We begin with the raw amino-acid sequence, 354 residues long: tRNA-specific 2-thiouridylase MnmA (354 aa).

ATP is bound by residues 6 to 13 (LLSGGVDS) and leucine 33. Cysteine 100 serves as the catalytic Nucleophile. A disulfide bridge connects residues cysteine 100 and cysteine 195. An ATP-binding site is contributed by glycine 123. An interaction with tRNA region spans residues 145–147 (KDQ). Cysteine 195 functions as the Cysteine persulfide intermediate in the catalytic mechanism.

It belongs to the MnmA/TRMU family.

The protein localises to the cytoplasm. It catalyses the reaction S-sulfanyl-L-cysteinyl-[protein] + uridine(34) in tRNA + AH2 + ATP = 2-thiouridine(34) in tRNA + L-cysteinyl-[protein] + A + AMP + diphosphate + H(+). In terms of biological role, catalyzes the 2-thiolation of uridine at the wobble position (U34) of tRNA, leading to the formation of s(2)U34. The protein is tRNA-specific 2-thiouridylase MnmA of Borrelia hermsii (strain HS1 / DAH).